The primary structure comprises 682 residues: Methionine synthase reductase (682 aa).

Residues 4–147 (FLIAFGSQTG…EVEPWIEKFF (144 aa)) form the Flavodoxin-like domain. Position 93-124 (93-124 (LLGLGDSNYSSYQTIPRKIDKQLTALGANRLF)) interacts with FMN. The region spanning 271–516 (TKPFEVLVVS…GKEPARFRLP (246 aa)) is the FAD-binding FR-type domain. Lys293 provides a ligand contact to NADP(+). FAD is bound by residues 455 to 458 (RPYS) and 488 to 491 (GLAT). Residues 607–609 (RVQ) and Asp643 each bind NADP(+). Trp681 is an FAD binding site.

It depends on FAD as a cofactor. FMN is required as a cofactor.

It catalyses the reaction 2 methylcob(III)alamin-[methionine synthase] + 2 S-adenosyl-L-homocysteine + NADP(+) + H(+) = 2 cob(II)alamin-[methionine synthase] + 2 S-adenosyl-L-methionine + NADPH. Involved in the reductive regeneration of cob(I)alamin cofactor required for the maintenance of methionine synthase in a functional state. The sequence is that of Methionine synthase reductase from Caenorhabditis elegans.